The following is a 485-amino-acid chain: Aspartyl/glutamyl-tRNA(Asn/Gln) amidotransferase subunit B (485 aa).

Belongs to the GatB/GatE family. GatB subfamily. Heterotrimer of A, B and C subunits.

It carries out the reaction L-glutamyl-tRNA(Gln) + L-glutamine + ATP + H2O = L-glutaminyl-tRNA(Gln) + L-glutamate + ADP + phosphate + H(+). It catalyses the reaction L-aspartyl-tRNA(Asn) + L-glutamine + ATP + H2O = L-asparaginyl-tRNA(Asn) + L-glutamate + ADP + phosphate + 2 H(+). Its function is as follows. Allows the formation of correctly charged Asn-tRNA(Asn) or Gln-tRNA(Gln) through the transamidation of misacylated Asp-tRNA(Asn) or Glu-tRNA(Gln) in organisms which lack either or both of asparaginyl-tRNA or glutaminyl-tRNA synthetases. The reaction takes place in the presence of glutamine and ATP through an activated phospho-Asp-tRNA(Asn) or phospho-Glu-tRNA(Gln). The chain is Aspartyl/glutamyl-tRNA(Asn/Gln) amidotransferase subunit B from Borrelia hermsii (strain HS1 / DAH).